We begin with the raw amino-acid sequence, 588 residues long: DNA mismatch repair protein MutL (588 aa).

It belongs to the DNA mismatch repair MutL/HexB family.

Its function is as follows. This protein is involved in the repair of mismatches in DNA. It is required for dam-dependent methyl-directed DNA mismatch repair. May act as a 'molecular matchmaker', a protein that promotes the formation of a stable complex between two or more DNA-binding proteins in an ATP-dependent manner without itself being part of a final effector complex. This is DNA mismatch repair protein MutL from Fervidobacterium nodosum (strain ATCC 35602 / DSM 5306 / Rt17-B1).